The sequence spans 688 residues: Transcriptional regulatory protein GAT1 (688 aa).

Disordered stretches follow at residues 83 to 125, 259 to 278, 343 to 438, 482 to 565, and 639 to 678; these read NHNS…SPMI, TSASITSPTSTFSNQGNNSS, FTGI…GVSC, IKKR…NLDK, and LMTMHQSSHQSSLSTTFDHEVESNNEGSNSSGVNTSTANN. Positions 259–271 are enriched in low complexity; it reads TSASITSPTSTFS. Over residues 359-368 the composition is skewed to basic and acidic residues; sequence FDNKPKDDHF. The segment covering 369–379 has biased composition (polar residues); sequence NTSLSVSQQQP. Basic residues predominate over residues 382–397; it reads KKSKRKSTITKSKKKA. The segment covering 402–428 has biased composition (low complexity); the sequence is TTITSTGSTITTKSTNSNSTGKGTATG. The GATA-type zinc finger occupies 438 to 462; it reads CTNCGTKTTPLWRRNPQGQPLCNAC. Composition is skewed to low complexity over residues 488–510, 529–543, 552–565, 639–654, and 662–678; these read GNNNGSGNSSGTTNNSNNYNNKS, TNNTGLTNNNNSKSP, FDNNSNSALNNLDK, LMTMHQSSHQSSLSTT, and NNEGSNSSGVNTSTANN.

The protein localises to the nucleus. In terms of biological role, transcriptional regulator of nitrogen utilization required for nitrogen catabolite repression and utilization of isoleucine, tyrosine and tryptophan as nitrogen sources. Controls expression of the MEP2 ammonium permease, the DUR1,2 urea amidolyase, and the transcription factor STP1, which in turn mediates SAP2 expression, a long-known virulence attribute of C.albicans. Influences the filamentation process depending upon the nitrogen sources available. Required for virulence in a mouse systemic infection model. This Candida albicans (strain SC5314 / ATCC MYA-2876) (Yeast) protein is Transcriptional regulatory protein GAT1 (GAT1).